Reading from the N-terminus, the 104-residue chain is uncharacterized protein (104 aa).

The chain crosses the membrane as a helical span at residues isoleucine 77–serine 98.

The protein localises to the membrane. This is an uncharacterized protein from Saccharomyces cerevisiae (strain ATCC 204508 / S288c) (Baker's yeast).